The primary structure comprises 311 residues: Beta-lactamase (311 aa).

Residues 1 to 36 (MRKPTSSLTRRSVLGAGLGLGGALALGSTTASAASA) constitute a signal peptide (tat-type signal). Catalysis depends on Ser-86, which acts as the Acyl-ester intermediate. 252-254 (KSG) contacts substrate.

The protein belongs to the class-A beta-lactamase family. Predicted to be exported by the Tat system. The position of the signal peptide cleavage has not been experimentally proven.

The enzyme catalyses a beta-lactam + H2O = a substituted beta-amino acid. Hydrolyzes benzylpenicillin and cloxacillin (at 10% of the rate of benzylpenicillin). The protein is Beta-lactamase (bla) of Streptomyces cellulosae.